The sequence spans 317 residues: Melanocyte-stimulating hormone receptor (317 aa).

At 1–37 (MPVQGSQRRLLGSLNSTPTATPHLGLAANQTGARCLE) the chain is on the extracellular side. Residue N29 is glycosylated (N-linked (GlcNAc...) asparagine). A helical transmembrane segment spans residues 38–63 (VSIPDGLFLSLGLVSLVENVLVVTAI). At 64–72 (AKNRNLHSP) the chain is on the cytoplasmic side. A helical membrane pass occupies residues 73-93 (MYCFICCLALSDLLVSGSNML). Residues 94–118 (ETAVILLLEAGALAARAAVVQQLDN) lie on the Extracellular side of the membrane. Residues 119–140 (VIDVITCSSMLSSLCFLGAIAV) form a helical membrane-spanning segment. Residues 141–163 (DRYISIFYALRYHSIVTLPRARR) are Cytoplasmic-facing. The chain crosses the membrane as a helical span at residues 164-183 (AVAAIWVASVLFSMLFIAYY). The Extracellular segment spans residues 184–191 (DHAAVLLC). A helical membrane pass occupies residues 192–211 (LVVFFLAMLVLMAVLYVHML). The Cytoplasmic segment spans residues 212-240 (ARACQHAQGIARLHKRQCPAHQGFGLKGA). A helical membrane pass occupies residues 241–266 (ATLTILLGIFFLCWGPFFLHLTLIVL). At 267 to 279 (CPQHPTCSCIFKN) the chain is on the extracellular side. A helical membrane pass occupies residues 280–300 (FNLFLALIICNAIIDPLIYAF). Topologically, residues 301-317 (RSQELRRTLKEVLLCSW) are cytoplasmic. C315 carries the S-palmitoyl cysteine lipid modification.

It belongs to the G-protein coupled receptor 1 family. In terms of assembly, interacts with MGRN1, but does not undergo MGRN1-mediated ubiquitination; this interaction competes with GNAS-binding and thus inhibits agonist-induced cAMP production. Interacts with OPN3; the interaction results in a decrease in MC1R-mediated cAMP signaling and ultimately a decrease in melanin production in melanocytes.

The protein localises to the cell membrane. In terms of biological role, receptor for MSH (alpha, beta and gamma) and ACTH. The activity of this receptor is mediated by G proteins which activate adenylate cyclase. Mediates melanogenesis, the production of eumelanin (black/brown) and phaeomelanin (red/yellow), via regulation of cAMP signaling in melanocytes. The protein is Melanocyte-stimulating hormone receptor (MC1R) of Chlorocebus aethiops (Green monkey).